Reading from the N-terminus, the 170-residue chain is Lipoprotein signal peptidase (170 aa).

The next 3 helical transmembrane spans lie at 12-32, 67-87, and 93-113; these read WYWV…WVLA, WQRW…TVWL, and SLWK…GNLI. Catalysis depends on residues Asp-123 and Asp-141. A helical membrane pass occupies residues 137–157; sequence FNIADSAIFIGAVLIIWDSFF.

This sequence belongs to the peptidase A8 family.

It localises to the cell inner membrane. It carries out the reaction Release of signal peptides from bacterial membrane prolipoproteins. Hydrolyzes -Xaa-Yaa-Zaa-|-(S,diacylglyceryl)Cys-, in which Xaa is hydrophobic (preferably Leu), and Yaa (Ala or Ser) and Zaa (Gly or Ala) have small, neutral side chains.. Its pathway is protein modification; lipoprotein biosynthesis (signal peptide cleavage). This protein specifically catalyzes the removal of signal peptides from prolipoproteins. This is Lipoprotein signal peptidase from Shewanella sp. (strain MR-4).